Here is a 215-residue protein sequence, read N- to C-terminus: S-crystallin 3 (215 aa).

Positions 2-80 constitute a GST N-terminal domain; that stretch reads PSYTLHYFNH…YLAREFGYHG (79 aa). The GST C-terminal domain occupies 82–215; that stretch reads SNMEMARVDF…YLKKRCRTDF (134 aa).

The protein belongs to the GST superfamily. As to expression, lens.

S-crystallins are structural components of squids and octopi eye lens. Contains relatively little if any GST activity. This is S-crystallin 3 from Enteroctopus dofleini (North Pacific giant octopus).